The following is a 176-amino-acid chain: Ribosome maturation factor RimM (176 aa).

A PRC barrel domain is found at 97–176 (DNDFYHRDLI…QIVVDWDPDF (80 aa)).

It belongs to the RimM family. Binds ribosomal protein uS19.

It is found in the cytoplasm. Functionally, an accessory protein needed during the final step in the assembly of 30S ribosomal subunit, possibly for assembly of the head region. Essential for efficient processing of 16S rRNA. May be needed both before and after RbfA during the maturation of 16S rRNA. It has affinity for free ribosomal 30S subunits but not for 70S ribosomes. The sequence is that of Ribosome maturation factor RimM from Shewanella denitrificans (strain OS217 / ATCC BAA-1090 / DSM 15013).